The primary structure comprises 198 residues: Large ribosomal subunit protein bL27c (198 aa).

Residues 1 to 58 (MAMATSMSLNLIGAFKGLSLSSTSSFLRGDLSFSPKTSFTVTLPLENLQAPIPLTIES) constitute a chloroplast transit peptide.

It belongs to the bacterial ribosomal protein bL27 family. As to quaternary structure, part of the 50S ribosomal subunit.

The protein resides in the plastid. It is found in the chloroplast. The protein is Large ribosomal subunit protein bL27c (RPL27) of Arabidopsis thaliana (Mouse-ear cress).